The primary structure comprises 127 residues: Small ribosomal subunit protein uS13 (127 aa).

The tract at residues 99–127 (RGQRTRTNARTRRGRRGQAIGIKKKTLKK) is disordered.

The protein belongs to the universal ribosomal protein uS13 family. Part of the 30S ribosomal subunit. Forms a loose heterodimer with protein S19. Forms two bridges to the 50S subunit in the 70S ribosome.

In terms of biological role, located at the top of the head of the 30S subunit, it contacts several helices of the 16S rRNA. In the 70S ribosome it contacts the 23S rRNA (bridge B1a) and protein L5 of the 50S subunit (bridge B1b), connecting the 2 subunits; these bridges are implicated in subunit movement. Contacts the tRNAs in the A and P-sites. In Roseiflexus castenholzii (strain DSM 13941 / HLO8), this protein is Small ribosomal subunit protein uS13.